A 344-amino-acid polypeptide reads, in one-letter code: UDP-3-O-acylglucosamine N-acyltransferase (344 aa).

Histidine 248 serves as the catalytic Proton acceptor.

This sequence belongs to the transferase hexapeptide repeat family. LpxD subfamily. Homotrimer.

The catalysed reaction is a UDP-3-O-[(3R)-3-hydroxyacyl]-alpha-D-glucosamine + a (3R)-hydroxyacyl-[ACP] = a UDP-2-N,3-O-bis[(3R)-3-hydroxyacyl]-alpha-D-glucosamine + holo-[ACP] + H(+). Its pathway is bacterial outer membrane biogenesis; LPS lipid A biosynthesis. Its function is as follows. Catalyzes the N-acylation of UDP-3-O-acylglucosamine using 3-hydroxyacyl-ACP as the acyl donor. Is involved in the biosynthesis of lipid A, a phosphorylated glycolipid that anchors the lipopolysaccharide to the outer membrane of the cell. The protein is UDP-3-O-acylglucosamine N-acyltransferase of Prochlorococcus marinus (strain MIT 9515).